The primary structure comprises 209 residues: Large ribosomal subunit protein uL4 (209 aa).

A disordered region spans residues arginine 46–glycine 76. Positions lysine 63–glycine 76 are enriched in basic residues.

It belongs to the universal ribosomal protein uL4 family. In terms of assembly, part of the 50S ribosomal subunit.

In terms of biological role, one of the primary rRNA binding proteins, this protein initially binds near the 5'-end of the 23S rRNA. It is important during the early stages of 50S assembly. It makes multiple contacts with different domains of the 23S rRNA in the assembled 50S subunit and ribosome. Functionally, forms part of the polypeptide exit tunnel. The polypeptide is Large ribosomal subunit protein uL4 (Halothermothrix orenii (strain H 168 / OCM 544 / DSM 9562)).